The following is a 512-amino-acid chain: 2-isopropylmalate synthase (512 aa).

A Pyruvate carboxyltransferase domain is found at 4–266; it reads IQFFDTTLRD…ETNIVLNQFK (263 aa). Mn(2+) contacts are provided by aspartate 13, histidine 201, histidine 203, and asparagine 237. The interval 390–512 is regulatory domain; the sequence is ELKHLQVQYV…TKQVDFEEVK (123 aa).

The protein belongs to the alpha-IPM synthase/homocitrate synthase family. LeuA type 1 subfamily. Homodimer. The cofactor is Mn(2+).

Its subcellular location is the cytoplasm. The catalysed reaction is 3-methyl-2-oxobutanoate + acetyl-CoA + H2O = (2S)-2-isopropylmalate + CoA + H(+). It functions in the pathway amino-acid biosynthesis; L-leucine biosynthesis; L-leucine from 3-methyl-2-oxobutanoate: step 1/4. Its function is as follows. Catalyzes the condensation of the acetyl group of acetyl-CoA with 3-methyl-2-oxobutanoate (2-ketoisovalerate) to form 3-carboxy-3-hydroxy-4-methylpentanoate (2-isopropylmalate). The protein is 2-isopropylmalate synthase of Listeria welshimeri serovar 6b (strain ATCC 35897 / DSM 20650 / CCUG 15529 / CIP 8149 / NCTC 11857 / SLCC 5334 / V8).